The chain runs to 98 residues: Putative septation protein SpoVG (98 aa).

The protein belongs to the SpoVG family.

Essential for sporulation. Interferes with or is a negative regulator of the pathway leading to asymmetric septation. This chain is Putative septation protein SpoVG, found in Bacillus pumilus (strain SAFR-032).